An 807-amino-acid chain; its full sequence is Dual specificity protein phosphatase PPS1 (807 aa).

The Tyrosine-protein phosphatase domain maps to 585–783 (LPSRILRHLY…LFKWWKKHYN (199 aa)). Residues 593 to 807 (LYLGSLDHAQ…GIAEVNMKYT (215 aa)) are catalytic. The Phosphocysteine intermediate role is filled by Cys725.

The protein belongs to the protein-tyrosine phosphatase family. Non-receptor class dual specificity subfamily.

It carries out the reaction O-phospho-L-tyrosyl-[protein] + H2O = L-tyrosyl-[protein] + phosphate. It catalyses the reaction O-phospho-L-seryl-[protein] + H2O = L-seryl-[protein] + phosphate. The catalysed reaction is O-phospho-L-threonyl-[protein] + H2O = L-threonyl-[protein] + phosphate. Functionally, protein phosphatase with specificity for serine, threonine, and tyrosine residues; has a role in the DNA synthesis phase of the cell cycle. The sequence is that of Dual specificity protein phosphatase PPS1 (PPS1) from Saccharomyces cerevisiae (strain ATCC 204508 / S288c) (Baker's yeast).